The sequence spans 309 residues: Succinoglycan biosynthesis protein ExoM (309 aa).

It belongs to the glycosyltransferase 2 family.

It localises to the cell inner membrane. The protein operates within glycan metabolism; exopolysaccharide biosynthesis. Functionally, glycosyltransferase required for the synthesis of succinoglycan (EPS I). Needed for the addition of the fourth sugar (glucose), catalyzes the formation of a beta-1,4 linkage between the third acetylated sugar and the fourth sugar. The protein is Succinoglycan biosynthesis protein ExoM (exoM) of Rhizobium meliloti (strain 1021) (Ensifer meliloti).